Consider the following 132-residue polypeptide: Large ribosomal subunit protein eL8 (132 aa).

An N6-acetyllysine; alternate modification is found at Lys8. A Glycyl lysine isopeptide (Lys-Gly) (interchain with G-Cter in SUMO2); alternate cross-link involves residue Lys8. Lys36 is covalently cross-linked (Glycyl lysine isopeptide (Lys-Gly) (interchain with G-Cter in SUMO2)). At Lys128 the chain carries N6-acetyllysine.

This sequence belongs to the eukaryotic ribosomal protein eL8 family. As to quaternary structure, component of the large ribosomal subunit. Interacts with CRY1. Interacts with DICER1, AGO2, TARBP2, MOV10 and EIF6; they form a large RNA-induced silencing complex (RISC).

The protein resides in the cytoplasm. Component of the large ribosomal subunit. The ribosome is a large ribonucleoprotein complex responsible for the synthesis of proteins in the cell. The protein is Large ribosomal subunit protein eL8 (RPL7A) of Sus scrofa (Pig).